A 307-amino-acid chain; its full sequence is NmrA-like family domain-containing oxidoreductase flvB (307 aa).

NADP(+)-binding positions include 4 to 9, 32 to 36, 53 to 54, 74 to 76, and 148 to 151; these read LITGAT, SSSSP, DY, STN, and YVEG.

Belongs to the NmrA-type oxidoreductase family.

It carries out the reaction (2S)-5,5-dimethyl-2,3,4,5-tetrahydropyridine-2,6-dicarboxylate + NADPH + 2 H(+) = (6S)-3,3-dimethylpiperidine-2,6-dicarboxylate + NADP(+). It catalyses the reaction (2S)-5,5-dimethyl-2,3,4,5-tetrahydropyridine-2,6-dicarboxylate + NADH + 2 H(+) = (6S)-3,3-dimethylpiperidine-2,6-dicarboxylate + NAD(+). It functions in the pathway secondary metabolite biosynthesis; terpenoid biosynthesis. NmrA-like family domain-containing oxidoreductase; part of the gene cluster that mediates the biosynthesis of flavunoidine, an alkaloidal terpenoid with a tetracyclic cage-like core connected to dimethylcadaverine via a C-N bond and acylated with 5,5-dimethyl-L-pipecolate. The tetracyclic core is synthesized by the terpene cyclase flvE and the cytochrome P450 monooxygenase flvD. The terpene cyclase flvE catalyzes the cyclization of farnesyl pyrophosphate (FPP) to form (1R,4R,5S)-(+)-acoradiene and the cytochrome P450 monooxygenase flvD is then responsible for oxidative conversion of (1R,4R,5S)-(+)-acoradiene into the tetracyclic cage present in the final product flavunoidine. In parallel, the N-methyltransferase flvH dimethylates L-lysine to give N,N-dimethyl-L-Lysin which is decarboxylated by flvG to afford dimethylcadaverine. The terpene cyclase-like protein flvF is the enzyme that attaches the dimethylcadaverine precusor at the C-7 of the tetracyclic cage to yield pre-flavunoidine. The cytochrome monooxygenase flvC hydroxylates the C-10 position of pre-flavunoidine whereas the NRPS flvI acylates the terpenoid core at the hydroxylated C-10 with dimethylpipecolate to yield final flavunoidine. The bifunctional enzyme flvA and the dehydrogenase flvB are responsible for the synthesis of the dimethylpipecolate precursor. The PLP-dependent lyase domain of flvA might use L-O-acetyl-homoserine and alpha-keto-isovalerate to form an intermediary ketone that can cyclize intramolecularly to yield an imine. The imine can be reduced by flvB to yield the 6-carboxylated pipecolate. The C-terminal alpha-KG-dependent oxygenase domain of flvA is then proposed to catalyze the decarboxylation to yield dimethylpipecolate. The protein is NmrA-like family domain-containing oxidoreductase flvB of Aspergillus flavus (strain ATCC 200026 / FGSC A1120 / IAM 13836 / NRRL 3357 / JCM 12722 / SRRC 167).